Reading from the N-terminus, the 314-residue chain is tRNA pseudouridine synthase B (314 aa).

His43 serves as a coordination point for substrate. The active-site Nucleophile is the Asp48. Substrate contacts are provided by Tyr76, Tyr179, and Leu200.

The protein belongs to the pseudouridine synthase TruB family. Type 1 subfamily.

It catalyses the reaction uridine(55) in tRNA = pseudouridine(55) in tRNA. Functionally, responsible for synthesis of pseudouridine from uracil-55 in the psi GC loop of transfer RNAs. The sequence is that of tRNA pseudouridine synthase B from Citrobacter koseri (strain ATCC BAA-895 / CDC 4225-83 / SGSC4696).